A 251-amino-acid polypeptide reads, in one-letter code: Sec-independent protein translocase protein TatC (251 aa).

The next 6 helical transmembrane spans lie at 23 to 43 (AFIIIFAICYYFSDYIYSFLL), 73 to 93 (SAFTAFTIIIPIIALECYLFI), 104 to 124 (IIAFILFMSPILFWCGSIFVF), 159 to 179 (LVIHLIIAFGIAFQLPIVIIV), 197 to 217 (IAVVINFIIAGILTPPDILSQ), and 218 to 238 (FALAIPLLLLYETSIIICNFI).

It belongs to the TatC family. As to quaternary structure, the Tat system comprises two distinct complexes: a TatABC complex, containing multiple copies of TatA, TatB and TatC subunits, and a separate TatA complex, containing only TatA subunits. Substrates initially bind to the TatABC complex, which probably triggers association of the separate TatA complex to form the active translocon.

It is found in the cell inner membrane. Part of the twin-arginine translocation (Tat) system that transports large folded proteins containing a characteristic twin-arginine motif in their signal peptide across membranes. Together with TatB, TatC is part of a receptor directly interacting with Tat signal peptides. This chain is Sec-independent protein translocase protein TatC, found in Rickettsia prowazekii (strain Madrid E).